Here is a 106-residue protein sequence, read N- to C-terminus: Large ribosomal subunit protein eL42 (106 aa).

A disordered region spans residues 36-56; sequence FAQGKRRYDRKQSGYGGQTKP.

The protein belongs to the eukaryotic ribosomal protein eL42 family.

This chain is Large ribosomal subunit protein eL42 (RPL44), found in Phaffia rhodozyma (Yeast).